A 114-amino-acid polypeptide reads, in one-letter code: Tyrosine-protein phosphatase 27 (114 aa).

Residues 1–114 (WQMIVEHKCC…ELGNDNPIVV (114 aa)) form the Tyrosine-protein phosphatase domain. Substrate is bound at residue Asp-82.

It belongs to the protein-tyrosine phosphatase family.

It catalyses the reaction O-phospho-L-tyrosyl-[protein] + H2O = L-tyrosyl-[protein] + phosphate. The chain is Tyrosine-protein phosphatase 27 (STY-27) from Styela plicata (Wrinkled sea squirt).